The chain runs to 247 residues: MADTTPNGPQGAGAVQFMMTNKLDTAMWLSRLFTVYCSALFVLPLLGLHEAASFYQRALLANALTSALRLHQRLPHFQLSRAFLAQALLEDSCHYLLYSLIFVNSYPVTMSIFPVLLFSLLHAATYTKKVLDAKGSNSLPLLRSVLDKLSTNQQNILKFIACNEIFLMPATVFMLFSGQGSLLQPFIYYRFLTLRYSSRRNPYCRNLFNELRIVVEHIIMKPSCPLFVRRLCLQSIAFISRLAPTVA.

N-acetylalanine is present on A2. Residues 2 to 31 lie on the Lumenal side of the membrane; sequence ADTTPNGPQGAGAVQFMMTNKLDTAMWLSR. The helical transmembrane segment at 32 to 52 threads the bilayer; sequence LFTVYCSALFVLPLLGLHEAA. The Cytoplasmic segment spans residues 53–100; it reads SFYQRALLANALTSALRLHQRLPHFQLSRAFLAQALLEDSCHYLLYSL. A helical membrane pass occupies residues 101 to 121; the sequence is IFVNSYPVTMSIFPVLLFSLL. The Lumenal portion of the chain corresponds to 122–155; that stretch reads HAATYTKKVLDAKGSNSLPLLRSVLDKLSTNQQN. The helical transmembrane segment at 156-176 threads the bilayer; the sequence is ILKFIACNEIFLMPATVFMLF. Over 177–247 the chain is Cytoplasmic; sequence SGQGSLLQPF…FISRLAPTVA (71 aa).

Belongs to the PER33/POM33 family. As to quaternary structure, interacts with EIF2AK3. Interacts with ARL6IP1, isoform RTN1-A of RTN1, isoform RTN2-B of RTN2, isoform 3 of RTN3 and isoform 3 of RTN4. Interacts with RNF5. Interacts with RNF26. Interacts with PKD2. Highly expressed in the liver and significantly in brain, lungs and kidneys.

The protein localises to the endoplasmic reticulum membrane. The protein resides in the melanosome. Its subcellular location is the nucleus envelope. Functionally, acts as a regulator of the tubular endoplasmic reticulum (ER) network by modulating intracellular calcium homeostasis. Mechanistically, stimulates PKD2 calcium-dependent activity. Suppresses the RTN3/4-induced formation of the ER tubules. Positively regulates PERK-mediated and IRE1-mediated unfolded protein response signaling. Plays an essential role in VEGF-mediated release of Ca(2+) from ER stores during angiogenesis. Also plays a role in the modulation of innate immune signaling through the cGAS-STING pathway by interacting with RNF26. Participates in lipid metabolism by acting as a downstream effector of the pyruvate kinase/PKM. Forms a complex with RNF5 to facilitate polyubiquitination and subsequent degradation of SCAP on the ER membrane. This is Transmembrane protein 33 (Tmem33) from Rattus norvegicus (Rat).